The primary structure comprises 356 residues: Histidinol-phosphate aminotransferase (356 aa).

Residue K214 is modified to N6-(pyridoxal phosphate)lysine.

It belongs to the class-II pyridoxal-phosphate-dependent aminotransferase family. Histidinol-phosphate aminotransferase subfamily. As to quaternary structure, homodimer. The cofactor is pyridoxal 5'-phosphate.

The catalysed reaction is L-histidinol phosphate + 2-oxoglutarate = 3-(imidazol-4-yl)-2-oxopropyl phosphate + L-glutamate. It participates in amino-acid biosynthesis; L-histidine biosynthesis; L-histidine from 5-phospho-alpha-D-ribose 1-diphosphate: step 7/9. This chain is Histidinol-phosphate aminotransferase, found in Escherichia coli O1:K1 / APEC.